The following is a 630-amino-acid chain: MAAGVAAWLPFARAAAIGWMPVASGPMPAPPRQERKRTQDALIVLNVSGTRFQTWQDTLERYPDTLLGSSERDFFYHPETQQYFFDRDPDIFRHILNFYRTGKLHYPRHECISAYDEELAFFGLIPEIIGDCCYEEYKDRRRENAERLQDDADTDTAGESALPTMTARQRVWRAFENPHTSTMALVFYYVTGFFIAVSVIANVVETVPCGSSPGHIKELPCGERYAVAFFCLDTACVMIFTVEYLLRLAAAPSRYRFVRSVMSIIDVVAILPYYIGLVMTDNEDVSGAFVTLRVFRVFRIFKFSRHSQGLRILGYTLKSCASELGFLLFSLTMAIIIFATVMFYAEKGSSASKFTSIPAAFWYTIVTMTTLGYGDMVPKTIAGKIFGSICSLSGVLVIALPVPVIVSNFSRIYHQNQRADKRRAQKKARLARIRAAKSGSANAYMQSKRNGLLSNQLQSSEDEQAFVSKSGSSFETQHHHLLHCLEKTTNHEFVDEQVFEESCMEVATVNRPSSHSPSLSSQQGVTSTCCSRRHKKTFRIPNANVSGSHQGSIQELSTIQIRCVERTPLSNSRSSLNAKMEECVKLNCEQPYVTTAIISIPTPPVTTPEGDDRPESPEYSGGNIVRVSAL.

Residues 1-184 (MAAGVAAWLP…FENPHTSTMA (184 aa)) lie on the Cytoplasmic side of the membrane. The tract at residues 2 to 20 (AAGVAAWLPFARAAAIGWM) is interaction with KCNIP1, KCNIP2, and other family members. Threonine 38 bears the Phosphothreonine mark. Residues 71–90 (ERDFFYHPETQQYFFDRDPD) form an interaction with KCNIP1 region. Zn(2+) is bound by residues histidine 105, cysteine 111, cysteine 132, and cysteine 133. Residues 185–206 (LVFYYVTGFFIAVSVIANVVET) form a helical membrane-spanning segment. Over 207–226 (VPCGSSPGHIKELPCGERYA) the chain is Extracellular. A helical membrane pass occupies residues 227–249 (VAFFCLDTACVMIFTVEYLLRLA). Over 250–256 (AAPSRYR) the chain is Cytoplasmic. Residues 257–281 (FVRSVMSIIDVVAILPYYIGLVMTD) traverse the membrane as a helical segment. The Extracellular portion of the chain corresponds to 282–287 (NEDVSG). A helical; Voltage-sensor transmembrane segment spans residues 288–307 (AFVTLRVFRVFRIFKFSRHS). Residues 308-321 (QGLRILGYTLKSCA) lie on the Cytoplasmic side of the membrane. An S4-S5 linker region spans residues 308 to 321 (QGLRILGYTLKSCA). A helical membrane pass occupies residues 322-345 (SELGFLLFSLTMAIIIFATVMFYA). Over 346–357 (EKGSSASKFTSI) the chain is Extracellular. Positions 358–369 (PAAFWYTIVTMT) form an intramembrane region, helical. Residues threonine 370, leucine 371, glycine 372, and tyrosine 373 each coordinate K(+). The Selectivity filter signature appears at 370-375 (TLGYGD). Residues 370–377 (TLGYGDMV) lie within the membrane without spanning it. Residues 378–380 (PKT) are Extracellular-facing. A helical transmembrane segment spans residues 381 to 403 (IAGKIFGSICSLSGVLVIALPVP). Residues 404–630 (VIVSNFSRIY…GGNIVRVSAL (227 aa)) are Cytoplasmic-facing. Serine 438 carries the post-translational modification Phosphoserine. The interval 474–489 (FETQHHHLLHCLEKTT) is required for dendritic targeting. The important for normal channel activation and inactivation, for interaction with KCNIP2, and probably other family members as well stretch occupies residues 474–630 (FETQHHHLLH…GGNIVRVSAL (157 aa)). Phosphoserine occurs at positions 548, 552, 572, and 575. The disordered stretch occupies residues 600–630 (IPTPPVTTPEGDDRPESPEYSGGNIVRVSAL). Threonine 602 and threonine 607 each carry phosphothreonine. Serine 616 carries the phosphoserine modification. The short motif at 627–630 (VSAL) is the PDZ-binding element.

It belongs to the potassium channel family. D (Shal) (TC 1.A.1.2) subfamily. Kv4.2/KCND2 sub-subfamily. In terms of assembly, homotetramer or heterotetramer with KCND1 or KCND3. Associates with the regulatory subunits KCNIP2, KCNIP3 and KCNIP4. Interacts with the regulatory subunit KCNIP1; this interaction mediates the capture of both the N- and C-terminus of KCND2, preventing N-type inactivation and stabilizing the S6 conformation, thereby accelerating closed state inactivation and recovery. In vivo, probably exists as heteromeric complex containing variable proportions of KCND1, KCND2, KCND3, KCNIP1, KCNIP2, KCNIP3, KCNIP4, DPP6 and DPP10. The tetrameric channel can associate with up to four regulatory subunits, such as KCNIP2 or KCNIP4. Interaction with four KCNIP4 chains does not reduce interaction with DPP10. Interacts with DLG4 and NCS1/FREQ. Interacts with DLG1. Probably part of a complex consisting of KCNIP1, KCNIP2 isoform 3 and KCND2. Interacts with FLNA, FLNC and DPP10. Interacts (via S1 and S2 helices) with DPP6; this interaction stabilizes the conformation of the S1-S2 helices and facilitates S4 conformational change, including S4 sliding up and down, thereby accelerating activation, inactivation, and recovery. Post-translationally, phosphorylation at Ser-438 in response to MAPK activation is increased in stimulated dendrites. Interaction with KCNIP2 and DPP6 propomtes phosphorylation by PKA at Ser-552. Phosphorylation at Ser-552 has no effect on interaction with KCNIP3, but is required for the regulation of channel activity by KCNIP3. Phosphorylation at Ser-552 leads to KCND2 internalization. Phosphorylated by MAPK in response to signaling via the metabotropic glutamate receptor GRM5. Phosphorylation at Ser-616 is required for the down-regulation of neuronal A-type currents in response to signaling via GRM5. Detected in ovary, in corpus luteum and in granulosa and theca cells in the follicle (at protein level). Highly expressed throughout the brain. Detected in amygdala, caudate nucleus, cerebellum, hippocampus, substantia nigra and thalamus. Expression is not detectable or very low in heart, kidney, liver, lung, pancreas and skeletal muscle. Not detectable in human heart atrium.

It localises to the cell membrane. The protein localises to the cell projection. The protein resides in the dendrite. It is found in the synapse. Its subcellular location is the perikaryon. It localises to the postsynaptic cell membrane. The protein localises to the dendritic spine. The protein resides in the cell junction. It carries out the reaction K(+)(in) = K(+)(out). Voltage-gated potassium channel that mediates transmembrane potassium transport in excitable membranes, primarily in the brain. Mediates the major part of the dendritic A-type current I(SA) in brain neurons. This current is activated at membrane potentials that are below the threshold for action potentials. It regulates neuronal excitability, prolongs the latency before the first spike in a series of action potentials, regulates the frequency of repetitive action potential firing, shortens the duration of action potentials and regulates the back-propagation of action potentials from the neuronal cell body to the dendrites. Contributes to the regulation of the circadian rhythm of action potential firing in suprachiasmatic nucleus neurons, which regulates the circadian rhythm of locomotor activity. Functions downstream of the metabotropic glutamate receptor GRM5 and plays a role in neuronal excitability and in nociception mediated by activation of GRM5. Mediates the transient outward current I(to) in rodent heart left ventricle apex cells, but not in human heart, where this current is mediated by another family member. Forms tetrameric potassium-selective channels through which potassium ions pass in accordance with their electrochemical gradient. The channel alternates between opened and closed conformations in response to the voltage difference across the membrane. Can form functional homotetrameric channels and heterotetrameric channels that contain variable proportions of KCND2 and KCND3; channel properties depend on the type of pore-forming alpha subunits that are part of the channel. In vivo, membranes probably contain a mixture of heteromeric potassium channel complexes. Interaction with specific isoforms of the regulatory subunits KCNIP1, KCNIP2, KCNIP3 or KCNIP4 strongly increases expression at the cell surface and thereby increases channel activity; it modulates the kinetics of channel activation and inactivation, shifts the threshold for channel activation to more negative voltage values, shifts the threshold for inactivation to less negative voltages and accelerates recovery after inactivation. Likewise, interaction with DPP6 or DPP10 promotes expression at the cell membrane and regulates both channel characteristics and activity. Upon depolarization, the channel goes from a resting closed state (C state) to an activated but non-conducting state (C* state), from there, the channel may either inactivate (I state) or open (O state). The chain is A-type voltage-gated potassium channel KCND2 from Homo sapiens (Human).